Consider the following 472-residue polypeptide: Ribulose bisphosphate carboxylase large chain 1 (472 aa).

Substrate contacts are provided by Asn115 and Thr165. The active-site Proton acceptor is the Lys167. Lys169 is a binding site for substrate. 3 residues coordinate Mg(2+): Lys193, Asp195, and Glu196. Lys193 carries the N6-carboxylysine modification. His286 (proton acceptor) is an active-site residue. Residues Arg287, His319, and Ser371 each coordinate substrate.

The protein belongs to the RuBisCO large chain family. Type I subfamily. In terms of assembly, heterohexadecamer of 8 large chains and 8 small chains. Mg(2+) is required as a cofactor.

The enzyme catalyses 2 (2R)-3-phosphoglycerate + 2 H(+) = D-ribulose 1,5-bisphosphate + CO2 + H2O. It carries out the reaction D-ribulose 1,5-bisphosphate + O2 = 2-phosphoglycolate + (2R)-3-phosphoglycerate + 2 H(+). Functionally, ruBisCO catalyzes two reactions: the carboxylation of D-ribulose 1,5-bisphosphate, the primary event in carbon dioxide fixation, as well as the oxidative fragmentation of the pentose substrate. Both reactions occur simultaneously and in competition at the same active site. The sequence is that of Ribulose bisphosphate carboxylase large chain 1 from Rhodopseudomonas palustris (strain BisB5).